Reading from the N-terminus, the 357-residue chain is MAQHRVVLLPGDGIGPEITAVARQLLEAVSQRHGFELCFDGQLIGGSAIDACGEPLPASTLDACKAADAVLLAAIGSPRFDNLPRDKRPETGLLGLRSGMALFANLRPVKIVPALIGASSLRPEVIEGVDLMVVRELTGGIYFGQPKGRIQADGEERGFNTMTYSSSEVDRIARVAFDLARERRGNLCSVDKANVLDVSQLWRDRVDAMAPAYSDVEVSHMYVDNAAMQLVRSPRQFDVLLTGNLFGDILSDEAAMLTGSIGMLPSASLGSDCPGLFEPVHGSAPDIAGQDKANPMAMVLSAAMMLRIGLKQTEAAADLEAAVDKVLAAGFRTGDLMAEGCTALGCRAMGDALLKAL.

Substrate contacts are provided by Arg-97, Arg-107, Arg-135, and Asp-224. Mg(2+) contacts are provided by Asp-224, Asp-248, and Asp-252. Residue 282–294 (GSAPDIAGQDKAN) participates in NAD(+) binding.

Belongs to the isocitrate and isopropylmalate dehydrogenases family. LeuB type 1 subfamily. In terms of assembly, homodimer. It depends on Mg(2+) as a cofactor. Mn(2+) is required as a cofactor.

The protein resides in the cytoplasm. It carries out the reaction (2R,3S)-3-isopropylmalate + NAD(+) = 4-methyl-2-oxopentanoate + CO2 + NADH. It functions in the pathway amino-acid biosynthesis; L-leucine biosynthesis; L-leucine from 3-methyl-2-oxobutanoate: step 3/4. Its function is as follows. Catalyzes the oxidation of 3-carboxy-2-hydroxy-4-methylpentanoate (3-isopropylmalate) to 3-carboxy-4-methyl-2-oxopentanoate. The product decarboxylates to 4-methyl-2 oxopentanoate. This is 3-isopropylmalate dehydrogenase from Parasynechococcus marenigrum (strain WH8102).